Consider the following 220-residue polypeptide: MTIIRTLFVYYSFLFILVLCSSKDTEVNNGEKVNIVAFGEGRCSDTSFWMKWHWLPMWRMLGSTGRINFEYHPYGIKTTCVDSDSGDDVVCECHHGARECLLNQLQACVIEALPNFEEYMEVVTCIQGKQNISMAAEACFNEPSKLERAKMMSCADSRHGRKLFSDHENFVAQMAPEMDWAPWILINGKRYKEAEEDLWQFLCDRFIDPRPIHCPKKIIY.

Positions 1-22 (MTIIRTLFVYYSFLFILVLCSS) are cleaved as a signal peptide. Asparagine 131 is a glycosylation site (N-linked (GlcNAc...) asparagine).

It belongs to the GILT family.

Its subcellular location is the secreted. The sequence is that of GILT-like protein CBG03282 from Caenorhabditis briggsae.